A 1233-amino-acid chain; its full sequence is STE20-like serine/threonine-protein kinase (1233 aa).

At serine 14 the chain carries Phosphoserine. Residues 34–292 enclose the Protein kinase domain; it reads WEIIGELGDG…TSQLLQHPFV (259 aa). ATP-binding positions include 40 to 48 and lysine 63; that span reads LGDGAFGKV. Residue aspartate 155 is the Proton acceptor of the active site. Threonine 183 carries the post-translational modification Phosphothreonine. A Phosphoserine modification is found at serine 189. Residues 309 to 351 are disordered; the sequence is AEVTEEVEDGKEEDEEEEAENALPIPANKRASSDLSIASSEED. Acidic residues predominate over residues 312–328; that stretch reads TEEVEDGKEEDEEEEAE. Residues serine 340, serine 341, serine 344, serine 347, serine 348, serine 354, and serine 372 each carry the phosphoserine modification. A compositionally biased stretch (basic and acidic residues) spans 363 to 399; sequence VSERTEQSTSEDKFSNKILNEKPTTDGPEKAVDEHAS. Disordered regions lie at residues 363-453, 498-650, 663-761, and 772-791; these read VSER…ENNR, VSQE…SIEE, ALGS…SGDL, and AKDS…KTLK. Residues 432–441 are compositionally biased toward polar residues; that stretch reads PDTQDQQTVD. Positions 518–529 are enriched in basic and acidic residues; it reads LTKEETQEKLGK. Phosphoserine is present on residues serine 543, serine 561, and serine 566. Over residues 598–607 the composition is skewed to basic and acidic residues; sequence GGERVEDKQP. Residues 619-630 show a composition bias toward polar residues; it reads QLTSTSETTRAT. Residues serine 643, serine 647, and serine 666 each carry the phosphoserine modification. Positions 690 to 701 are enriched in low complexity; the sequence is AESQAPAASQPS. A compositionally biased stretch (polar residues) spans 746–761; the sequence is TDSGTGSTVENSSGDL. Phosphoserine occurs at positions 775 and 777. Threonine 812 is subject to Phosphothreonine. Phosphoserine is present on serine 816. Residues 824–1067 adopt a coiled-coil conformation; sequence LRRQELRELR…LKNRQTQERA (244 aa). One can recognise a UVR domain in the interval 873–908; the sequence is DQEIENLEKQQKQTIERLEQEHTNRLRDEAKRIKGE. Residues 944-963 form a disordered region; it reads KRRKEELAQSQHAQEQEFVQ. Positions 954 to 963 are enriched in low complexity; sequence QHAQEQEFVQ. At threonine 1095 the chain carries Phosphothreonine. Residues 1107 to 1181 are a coiled coil; the sequence is AAQEEKRQKN…ELKEWREKLR (75 aa). Residues 1109 to 1129 form a disordered region; the sequence is QEEKRQKNERMAQHQKHESQM.

This sequence belongs to the protein kinase superfamily. STE Ser/Thr protein kinase family. STE20 subfamily. In terms of processing, proteolytically cleaved by caspase-3. Autophosphorylated. Ubiquitously expressed.

It is found in the cytoplasm. It catalyses the reaction L-seryl-[protein] + ATP = O-phospho-L-seryl-[protein] + ADP + H(+). The catalysed reaction is L-threonyl-[protein] + ATP = O-phospho-L-threonyl-[protein] + ADP + H(+). Mediates apoptosis and actin stress fiber dissolution. In Mus musculus (Mouse), this protein is STE20-like serine/threonine-protein kinase (Slk).